The primary structure comprises 366 residues: Cobalt-precorrin-5B C(1)-methyltransferase (366 aa).

The protein belongs to the CbiD family.

The enzyme catalyses Co-precorrin-5B + S-adenosyl-L-methionine = Co-precorrin-6A + S-adenosyl-L-homocysteine. It participates in cofactor biosynthesis; adenosylcobalamin biosynthesis; cob(II)yrinate a,c-diamide from sirohydrochlorin (anaerobic route): step 6/10. In terms of biological role, catalyzes the methylation of C-1 in cobalt-precorrin-5B to form cobalt-precorrin-6A. This is Cobalt-precorrin-5B C(1)-methyltransferase from Hahella chejuensis (strain KCTC 2396).